Reading from the N-terminus, the 56-residue chain is Large ribosomal subunit protein bL32 (56 aa).

The segment covering 1–20 has biased composition (basic residues); the sequence is MAVPKKKKSKSKRNHRHAVW. Residues 1-21 form a disordered region; sequence MAVPKKKKSKSKRNHRHAVWK.

The protein belongs to the bacterial ribosomal protein bL32 family.

The protein is Large ribosomal subunit protein bL32 of Prochlorococcus marinus (strain MIT 9312).